The chain runs to 292 residues: tRNA-cytidine(32) 2-sulfurtransferase (292 aa).

The short motif at 54–59 (SGGKDS) is the PP-loop motif element. Positions 129, 132, and 220 each coordinate [4Fe-4S] cluster.

The protein belongs to the TtcA family. In terms of assembly, homodimer. It depends on Mg(2+) as a cofactor. [4Fe-4S] cluster serves as cofactor.

The protein resides in the cytoplasm. It catalyses the reaction cytidine(32) in tRNA + S-sulfanyl-L-cysteinyl-[cysteine desulfurase] + AH2 + ATP = 2-thiocytidine(32) in tRNA + L-cysteinyl-[cysteine desulfurase] + A + AMP + diphosphate + H(+). The protein operates within tRNA modification. Its function is as follows. Catalyzes the ATP-dependent 2-thiolation of cytidine in position 32 of tRNA, to form 2-thiocytidine (s(2)C32). The sulfur atoms are provided by the cysteine/cysteine desulfurase (IscS) system. The protein is tRNA-cytidine(32) 2-sulfurtransferase of Cereibacter sphaeroides (strain ATCC 17025 / ATH 2.4.3) (Rhodobacter sphaeroides).